The chain runs to 417 residues: Tol-Pal system protein TolB (417 aa).

The first 16 residues, 1–16 (MRYLWLFLIHTIGLFA), serve as a signal peptide directing secretion.

The protein belongs to the TolB family. In terms of assembly, the Tol-Pal system is composed of five core proteins: the inner membrane proteins TolA, TolQ and TolR, the periplasmic protein TolB and the outer membrane protein Pal. They form a network linking the inner and outer membranes and the peptidoglycan layer.

It localises to the periplasm. In terms of biological role, part of the Tol-Pal system, which plays a role in outer membrane invagination during cell division and is important for maintaining outer membrane integrity. This is Tol-Pal system protein TolB from Helicobacter pylori (strain ATCC 700392 / 26695) (Campylobacter pylori).